Reading from the N-terminus, the 268-residue chain is Casein kinase II subunit beta (268 aa).

Positions 222–268 (LSNNNQNNQNNNINNNNNNNNNNNNNNNNNNNNQQNNNNQQNNNTNK) are disordered. The segment covering 224–268 (NNNQNNQNNNINNNNNNNNNNNNNNNNNNNNQQNNNNQQNNNTNK) has biased composition (low complexity).

It belongs to the casein kinase 2 subunit beta family. Casein kinase II/CK2 is a tetramer composed of two alpha subunit and two beta subunits.

Its function is as follows. Regulatory subunit of casein kinase II/CK2. As part of the kinase complex regulates the basal catalytic activity of the alpha subunit a constitutively active serine/threonine-protein kinase that phosphorylates a large number of substrates containing acidic residues C-terminal to the phosphorylated serine or threonine. This chain is Casein kinase II subunit beta (csnk2b), found in Dictyostelium discoideum (Social amoeba).